Here is a 34-residue protein sequence, read N- to C-terminus: Photosystem II reaction center protein Psb30 (34 aa).

A helical membrane pass occupies residues 5-25 (VLAQLTVLAFVIAVGPITLIW).

Belongs to the Psb30/Ycf12 family. As to quaternary structure, PSII is composed of 1 copy each of membrane proteins PsbA, PsbB, PsbC, PsbD, PsbE, PsbF, PsbH, PsbI, PsbJ, PsbK, PsbL, PsbM, PsbT, PsbX, PsbY, PsbZ, Psb30/Ycf12, peripheral proteins of the oxygen-evolving complex and a large number of cofactors. It forms dimeric complexes.

It is found in the plastid. The protein localises to the chloroplast thylakoid membrane. In terms of biological role, a core subunit of photosystem II (PSII), probably helps stabilize the reaction center. This is Photosystem II reaction center protein Psb30 from Cyanidioschyzon merolae (strain NIES-3377 / 10D) (Unicellular red alga).